The following is a 402-amino-acid chain: Major outer membrane porin (402 aa).

The first 22 residues, 1–22 (MKKLLKSALLFAATGSALSLQA), serve as a signal peptide directing secretion.

Belongs to the chlamydial porin (CP) (TC 1.B.2) family. In terms of assembly, part of a disulfide cross-linked outer membrane complex (COMC) composed of the major outer membrane porin (MOMP), the small cysteine-rich protein (OmcA) and the large cysteine-rich periplasmic protein (OmcB).

It localises to the cell outer membrane. Its function is as follows. In elementary bodies (EBs, the infectious stage, which is able to survive outside the host cell) provides the structural integrity of the outer envelope through disulfide cross-links with the small cysteine-rich protein and the large cysteine-rich periplasmic protein. It has been described in publications as the Sarkosyl-insoluble COMC (Chlamydia outer membrane complex), and serves as the functional equivalent of peptidoglycan. It is present but some of the disulfide bonds are reduced in reticulate bodies (RBs). Functionally, permits diffusion of specific solutes through the outer membrane. The chain is Major outer membrane porin (ompA) from Chlamydophila psittaci (strain ATCC VR-125 / 6BC) (Chlamydia psittaci).